A 719-amino-acid polypeptide reads, in one-letter code: Photosystem I P700 chlorophyll a apoprotein A1 (719 aa).

A run of 8 helical transmembrane segments spans residues 59-82, 145-168, 184-208, 280-298, 335-358, 374-400, 422-444, and 520-538; these read IFGA…FHGA, LYCT…FHYH, LNHH…HVSL, TAHH…GHMY, WHAQ…HHMY, LSLF…IFMV, AIIS…LYIH, and FLVH…LILL. 2 residues coordinate [4Fe-4S] cluster: Cys-562 and Cys-571. The next 2 helical transmembrane spans lie at 578–599 and 653–675; these read HVFL…HFSW and LSAY…MFLF. Residue His-664 coordinates chlorophyll a'. Residues Met-672 and Tyr-680 each coordinate chlorophyll a. Residue Trp-681 coordinates phylloquinone. The chain crosses the membrane as a helical span at residues 713 to 719; that stretch reads AVGVTHT.

Belongs to the PsaA/PsaB family. In terms of assembly, the PsaA/B heterodimer binds the P700 chlorophyll special pair and subsequent electron acceptors. PSI consists of a core antenna complex that captures photons, and an electron transfer chain that converts photonic excitation into a charge separation. The eukaryotic PSI reaction center is composed of at least 11 subunits. P700 is a chlorophyll a/chlorophyll a' dimer, A0 is one or more chlorophyll a, A1 is one or both phylloquinones and FX is a shared 4Fe-4S iron-sulfur center. serves as cofactor.

It localises to the plastid. The protein localises to the chloroplast thylakoid membrane. The enzyme catalyses reduced [plastocyanin] + hnu + oxidized [2Fe-2S]-[ferredoxin] = oxidized [plastocyanin] + reduced [2Fe-2S]-[ferredoxin]. In terms of biological role, psaA and PsaB bind P700, the primary electron donor of photosystem I (PSI), as well as the electron acceptors A0, A1 and FX. PSI is a plastocyanin-ferredoxin oxidoreductase, converting photonic excitation into a charge separation, which transfers an electron from the donor P700 chlorophyll pair to the spectroscopically characterized acceptors A0, A1, FX, FA and FB in turn. Oxidized P700 is reduced on the lumenal side of the thylakoid membrane by plastocyanin. This chain is Photosystem I P700 chlorophyll a apoprotein A1, found in Asplenium nidus (Bird's nest fern).